Here is a 569-residue protein sequence, read N- to C-terminus: MDAGSSRSLENAVNKIYHDQLVPKINTSKKMSTLAHPPNILEMPQEIKKNCGGKQVEITLERIKMTKSIKEKQSNDLEKAAFKRKAEGEEKPTRKKEAKIIELDNQLITMPLPHIPLKNIMDVEMKLVYIDEVGVRYEFVESFMSTGSQPTCRVAEIVDPLSVPNFSFLPQIDKWLQVALKDASSCYRQKKYALAAGQFRTALELCSKGAVLEEPFDASAEDIASVASFIETKLVTCYLRMRKPDLALNHAHRSIVLNPAYFRNHLRQATVFRCLERYSEAARSAMIADYMFWLGGGREQSISKLIKLYWQAMIEEAITRAESFSVMYTPFATKIRADKIEKVKDVFTKTHPAYAEYIYTDLQTLHMLPQTVDWSSFPPQQYLLTLGFKNKEDGKFLEKISSRKLPIFTEHKTPFGLTREDTVRQMETMGKRILPILDFIRSTQLNGSFPASSGVMEKLQYAGLLSQLQRVKEQSQVINQAMAELATIPYLRDISQQEAELLQSLMADAMDTLEGRRNDNERVWNTIQKVGQIEDFLYQLEDSFLKTKKLRTARRQKTKMKRLQIVQQS.

The protein belongs to the SPATA16 family.

The protein localises to the golgi apparatus. It is found in the cytoplasmic vesicle. Its subcellular location is the secretory vesicle. It localises to the acrosome. Functionally, essential for spermiogenesis and male fertility. Involved in the formation of sperm acrosome during spermatogenesis. The sequence is that of Spermatogenesis-associated protein 16 (SPATA16) from Macaca fascicularis (Crab-eating macaque).